The primary structure comprises 295 residues: Glycine N-acyltransferase (295 aa).

N6-acetyllysine; alternate is present on residues Lys-15, Lys-126, and Lys-140. Lys-15, Lys-126, and Lys-140 each carry N6-succinyllysine; alternate. Lys-158 is subject to N6-acetyllysine. The residue at position 168 (Lys-168) is an N6-succinyllysine. Lys-255 carries the post-translational modification N6-acetyllysine; alternate. Lys-255 carries the N6-succinyllysine; alternate modification.

The protein belongs to the glycine N-acyltransferase family. In terms of tissue distribution, detected in liver (at protein level).

The protein localises to the mitochondrion. The catalysed reaction is an acyl-CoA + glycine = an N-acylglycine + CoA + H(+). The enzyme catalyses benzoyl-CoA + glycine = N-benzoylglycine + CoA + H(+). Functionally, mitochondrial acyltransferase which transfers an acyl group to the N-terminus of glycine and glutamine, although much less efficiently. Can conjugate a multitude of substrates to form a variety of N-acylglycines, thereby detoxify xenobiotics, such as benzoic acid or salicylic acid, and endogenous organic acids, such as isovaleric acid. The protein is Glycine N-acyltransferase (GLYAT) of Bos taurus (Bovine).